Consider the following 156-residue polypeptide: Small ribosomal subunit protein uS7 (156 aa).

This sequence belongs to the universal ribosomal protein uS7 family. In terms of assembly, part of the 30S ribosomal subunit. Contacts proteins S9 and S11.

In terms of biological role, one of the primary rRNA binding proteins, it binds directly to 16S rRNA where it nucleates assembly of the head domain of the 30S subunit. Is located at the subunit interface close to the decoding center, probably blocks exit of the E-site tRNA. The sequence is that of Small ribosomal subunit protein uS7 from Nitrosomonas eutropha (strain DSM 101675 / C91 / Nm57).